A 123-amino-acid polypeptide reads, in one-letter code: MKKNFRVKREKDFKAIFKEGTSFANRKFVVYQLENQKNHFRVGLSVSKKLGNAVTRNQIKRRIRHIIQNAKGSLVEDVDFVVIARKGVETLGYAEMEKNLLHVLKLSKIYREGNGSEKETKVD.

It belongs to the RnpA family. As to quaternary structure, consists of a catalytic RNA component (M1 or rnpB) and a protein subunit.

It carries out the reaction Endonucleolytic cleavage of RNA, removing 5'-extranucleotides from tRNA precursor.. In terms of biological role, RNaseP catalyzes the removal of the 5'-leader sequence from pre-tRNA to produce the mature 5'-terminus. It can also cleave other RNA substrates such as 4.5S RNA. The protein component plays an auxiliary but essential role in vivo by binding to the 5'-leader sequence and broadening the substrate specificity of the ribozyme. The sequence is that of Ribonuclease P protein component from Streptococcus pneumoniae (strain JJA).